A 335-amino-acid polypeptide reads, in one-letter code: Methionine import ATP-binding protein MetN 2 (335 aa).

The 241-residue stretch at 2-242 (IEFHNVHKTY…PQHSTTKRFV (241 aa)) folds into the ABC transporter domain. 38 to 45 (GHSGAGKS) serves as a coordination point for ATP.

The protein belongs to the ABC transporter superfamily. Methionine importer (TC 3.A.1.24) family. As to quaternary structure, the complex is composed of two ATP-binding proteins (MetN), two transmembrane proteins (MetI) and a solute-binding protein (MetQ).

It is found in the cell inner membrane. The catalysed reaction is L-methionine(out) + ATP + H2O = L-methionine(in) + ADP + phosphate + H(+). The enzyme catalyses D-methionine(out) + ATP + H2O = D-methionine(in) + ADP + phosphate + H(+). Part of the ABC transporter complex MetNIQ involved in methionine import. Responsible for energy coupling to the transport system. This chain is Methionine import ATP-binding protein MetN 2, found in Pseudomonas syringae pv. tomato (strain ATCC BAA-871 / DC3000).